The primary structure comprises 309 residues: Foldase protein PrsA 2 (309 aa).

A signal peptide spans 1–22; that stretch reads MKQMNKLITGVVTLATVVTLSA. The N-palmitoyl cysteine moiety is linked to residue Cys23. Cys23 carries the S-diacylglycerol cysteine lipid modification. The PpiC domain occupies 146–241; sequence TPTMTAEIMQ…RTYHIIKVTK (96 aa).

This sequence belongs to the PrsA family.

Its subcellular location is the cell membrane. It catalyses the reaction [protein]-peptidylproline (omega=180) = [protein]-peptidylproline (omega=0). In terms of biological role, plays a major role in protein secretion by helping the post-translocational extracellular folding of several secreted proteins. This Streptococcus pyogenes serotype M3 (strain ATCC BAA-595 / MGAS315) protein is Foldase protein PrsA 2 (prsA2).